Reading from the N-terminus, the 257-residue chain is Receptor expression-enhancing protein 4 (257 aa).

2 helical membrane passes run 1-21 (MVSW…YPAY) and 42-62 (WIVF…ISWF). Residues Ser152 and Ser194 each carry the phosphoserine modification. The interval 159–257 (IPDTSAPTYQ…KKTIPSDLDS (99 aa)) is disordered. Residue Thr196 is modified to Phosphothreonine. Residue Ser202 is modified to Phosphoserine. Thr250 carries the post-translational modification Phosphothreonine. Residue Ser253 is modified to Phosphoserine.

This sequence belongs to the DP1 family.

The protein localises to the endoplasmic reticulum membrane. Its function is as follows. Microtubule-binding protein required to ensure proper cell division and nuclear envelope reassembly by sequestering the endoplasmic reticulum away from chromosomes during mitosis. Probably acts by clearing the endoplasmic reticulum membrane from metaphase chromosomes. This chain is Receptor expression-enhancing protein 4 (Reep4), found in Rattus norvegicus (Rat).